Consider the following 369-residue polypeptide: Methionine import ATP-binding protein MetN 2 (369 aa).

An ABC transporter domain is found at 33 to 270 (VRFIGLGKTY…PRHEVTRTLL (238 aa)). 67-74 (GRSGAGKS) is an ATP binding site.

Belongs to the ABC transporter superfamily. Methionine importer (TC 3.A.1.24) family. The complex is composed of two ATP-binding proteins (MetN), two transmembrane proteins (MetI) and a solute-binding protein (MetQ).

It localises to the cell inner membrane. The catalysed reaction is L-methionine(out) + ATP + H2O = L-methionine(in) + ADP + phosphate + H(+). It carries out the reaction D-methionine(out) + ATP + H2O = D-methionine(in) + ADP + phosphate + H(+). Its function is as follows. Part of the ABC transporter complex MetNIQ involved in methionine import. Responsible for energy coupling to the transport system. The protein is Methionine import ATP-binding protein MetN 2 of Pseudomonas putida (strain ATCC 47054 / DSM 6125 / CFBP 8728 / NCIMB 11950 / KT2440).